We begin with the raw amino-acid sequence, 421 residues long: Anthranilate synthase component 1 (421 aa).

Residues serine 31 and 207–209 (PYM) contribute to the L-tryptophan site. 242-243 (GT) provides a ligand contact to chorismate. Position 269 (glutamate 269) interacts with Mg(2+). Residues tyrosine 357, arginine 377, 391–393 (GAG), and glycine 393 contribute to the chorismate site. Glutamate 406 serves as a coordination point for Mg(2+).

It belongs to the anthranilate synthase component I family. As to quaternary structure, heterotetramer consisting of two non-identical subunits: a beta subunit (TrpG) and a large alpha subunit (TrpE). The cofactor is Mg(2+).

The enzyme catalyses chorismate + L-glutamine = anthranilate + pyruvate + L-glutamate + H(+). Its pathway is amino-acid biosynthesis; L-tryptophan biosynthesis; L-tryptophan from chorismate: step 1/5. With respect to regulation, cooperatively feedback inhibited by tryptophan. Its function is as follows. Part of a heterotetrameric complex that catalyzes the two-step biosynthesis of anthranilate, an intermediate in the biosynthesis of L-tryptophan. In the first step, the glutamine-binding beta subunit (TrpG) of anthranilate synthase (AS) provides the glutamine amidotransferase activity which generates ammonia as a substrate that, along with chorismate, is used in the second step, catalyzed by the large alpha subunit of AS (TrpE) to produce anthranilate. In the absence of TrpG, TrpE can synthesize anthranilate directly from chorismate and high concentrations of ammonia. In Saccharolobus solfataricus (strain ATCC 35092 / DSM 1617 / JCM 11322 / P2) (Sulfolobus solfataricus), this protein is Anthranilate synthase component 1 (trpE).